Reading from the N-terminus, the 486-residue chain is Patatin-like phospholipase domain-containing protein 2 (486 aa).

At 1–8 (MFPKETTW) the chain is on the cytoplasmic side. The helical transmembrane segment at 9–29 (NISFAGCGFLGVYHIGVASCL) threads the bilayer. In terms of domain architecture, PNPLA spans 10–179 (ISFAGCGFLG…SDNLPLYELK (170 aa)). A GXGXXG motif is present at residues 14–19 (GCGFLG). The Extracellular portion of the chain corresponds to 30-42 (REHAPFLVANATH). Asn39 carries N-linked (GlcNAc...) asparagine glycosylation. Residues 43–63 (IYGASAGALTATALVTGACLG) traverse the membrane as a helical segment. The GXSXG signature appears at 45 to 49 (GASAG). The active-site Nucleophile is the Ser47. The Cytoplasmic segment spans residues 64 to 137 (EAGANIIEVS…IITHFNSKEE (74 aa)). Lys92 is covalently cross-linked (Glycyl lysine isopeptide (Lys-Gly) (interchain with G-Cter in ubiquitin)). A helical transmembrane segment spans residues 138–158 (LIQANVCSTFIPVYCGLIPPS). Residues 159-334 (LQGVRYVDGG…TTLSNMLPVR (176 aa)) are Extracellular-facing. Asp166 (proton acceptor) is an active-site residue. The DGA/G motif lies at 166-168 (DGG). The chain crosses the membrane as a helical span at residues 335 to 355 (LAMAMMVPYTLPLESAVSFTI). The Cytoplasmic portion of the chain corresponds to 356–486 (RLLEWLPDVP…PQHPPSSPPC (131 aa)). Ser377 bears the Phosphoserine; in vitro mark. A phosphoserine; by PKA mark is found at Ser399 and Ser409. Phosphoserine; in vitro is present on Ser433.

Interacts with ABHD5; this association stimulates PNPLA2 triglyceride hydrolase activity. Interacts with SERPINF1; this interaction stimulates the phospholipase A2 activity of PNPLA2. Despite a colocalization in lipid droplets, it probably does not interact with PLIN. Interacts with PLIN5; prevents interaction with ABHD5. Interacts with FAF2. Phosphorylation at Ser-409 by PKA is increased during fasting and moderate intensity exercise, and moderately increases lipolytic activity. In terms of processing, ubiquitinated by PEX2 in response to reactive oxygen species (ROS), leading to its degradation. Ubiquitination is stimulated by LDAH.

Its subcellular location is the lipid droplet. The protein localises to the cell membrane. The protein resides in the cytoplasm. The catalysed reaction is a triacylglycerol + H2O = a diacylglycerol + a fatty acid + H(+). It carries out the reaction a triacylglycerol + H2O = a 1,2-diacylglycerol + a fatty acid + H(+). It catalyses the reaction a triacylglycerol + H2O = a 1,3-diacylglycerol + a fatty acid + H(+). The enzyme catalyses a triacyl-sn-glycerol + H2O = a 1,3-diacyl-sn-glycerol + a fatty acid + H(+). The catalysed reaction is a triacyl-sn-glycerol + H2O = a 2,3-diacyl-sn-glycerol + a fatty acid + H(+). It carries out the reaction a 1-acylglycerol + a 1,3-diacylglycerol = a triacylglycerol + glycerol. It catalyses the reaction a 1-acylglycerol + a 1,2-diacylglycerol = a triacylglycerol + glycerol. The enzyme catalyses 2 a 1-acylglycerol = a 1,2-diacylglycerol + glycerol. The catalysed reaction is a triacylglycerol + all-trans-retinol = an all-trans-retinyl ester + a diacylglycerol. It carries out the reaction 1,2-di-(9Z-octadecenoyl)-glycerol + (9Z)-octadecenoate + H(+) = 1,2,3-tri-(9Z-octadecenoyl)-glycerol + H2O. It catalyses the reaction 1,2,3-tri-(9Z-octadecenoyl)-glycerol + H2O = 1,3-di-(9Z-octadecenoyl)-glycerol + (9Z)-octadecenoate + H(+). The enzyme catalyses 1-(9Z-octadecenoyl)-glycerol + 1,3-di-(9Z-octadecenoyl)-glycerol = 1,2,3-tri-(9Z-octadecenoyl)-glycerol + glycerol. The catalysed reaction is 1-(9Z-octadecenoyl)-glycerol + 1,2-di-(9Z-octadecenoyl)-glycerol = 1,2,3-tri-(9Z-octadecenoyl)-glycerol + glycerol. It carries out the reaction 2 1-(9Z-octadecenoyl)-glycerol = 1,2-di-(9Z-octadecenoyl)-glycerol + glycerol. It catalyses the reaction 1,2,3-tri-(9Z-octadecenoyl)-glycerol + all-trans-retinol = all-trans-retinyl 9Z-octadecenoate + di-(9Z)-octadecenoylglycerol. The enzyme catalyses 1,2,3-tri-(9Z)-hexadecenoylglycerol + H2O = 1,3-di-(9Z)-hexadecenoylglycerol + (9Z)-hexadecenoate + H(+). The catalysed reaction is 1,2,3-tri-(9Z,12Z)-octadecadienoylglycerol + H2O = 1,3-di-(9Z,12Z)-octadecadienoylglycerol + (9Z,12Z)-octadecadienoate + H(+). It carries out the reaction 1,2,3-tri-(9Z,12Z,15Z)-octadecatrienoylglycerol + H2O = 1,3-di-(9Z,12Z,15Z)-octadecatrienoylglycerol + (9Z,12Z,15Z)-octadecatrienoate + H(+). It catalyses the reaction 1,3-di-(9Z)-octadecenoyl-2-hexadecanoylglycerol + H2O = 1,3-di-(9Z-octadecenoyl)-glycerol + hexadecanoate + H(+). The enzyme catalyses 1,2-di-(9Z)-octadecenoyl-3-hexadecanoyl-sn-glycerol + H2O = 1-(9Z)-octadecenoyl-3-hexadecanoyl-sn-glycerol + (9Z)-octadecenoate + H(+). The catalysed reaction is 1-hexadecanoyl-2,3-di-(9Z)-octadecenoyl-sn-glycerol + H2O = 1-hexadecanoyl-3-(9Z)-octadecenoyl-sn-glycerol + (9Z)-octadecenoate + H(+). It carries out the reaction 1,2,3-tri-(9Z-octadecenoyl)-glycerol + H2O = 2,3-di-(9Z)-octadecenoyl-sn-glycerol + (9Z)-octadecenoate + H(+). It catalyses the reaction 1,2,3-tri-(9Z)-hexadecenoylglycerol + H2O = 2,3-di-(9Z)-hexadecenoyl-sn-glycerol + (9Z)-hexadecenoate + H(+). The enzyme catalyses 1,2,3-tri-(9Z,12Z)-octadecadienoylglycerol + H2O = 2,3-di-(9Z,12Z)-octadecadienoyl-sn-glycerol + (9Z,12Z)-octadecadienoate + H(+). The catalysed reaction is 1,2,3-tri-(9Z,12Z,15Z)-octadecatrienoylglycerol + H2O = 2,3-di-(9Z,12Z,15Z)-octadecatrienoyl-sn-glycerol + (9Z,12Z,15Z)-octadecatrienoate + H(+). It carries out the reaction 1,3-di-(9Z)-octadecenoyl-2-hexadecanoylglycerol + H2O = 2-hexadecanoyl-3-(9Z)-octadecenoyl-sn-glycerol + (9Z)-octadecenoate + H(+). It catalyses the reaction 1-hexadecanoyl-2,3-di-(9Z)-octadecenoyl-sn-glycerol + H2O = 2,3-di-(9Z)-octadecenoyl-sn-glycerol + hexadecanoate + H(+). The enzyme catalyses 1,2-di-(9Z)-octadecenoyl-3-hexadecanoyl-sn-glycerol + H2O = 2-(9Z-octadecenoyl)-3-hexadecanoyl-sn-glycerol + (9Z)-octadecenoate + H(+). The catalysed reaction is a 1,2-diacyl-sn-glycero-3-phosphocholine + H2O = a 1-acyl-sn-glycero-3-phosphocholine + a fatty acid + H(+). It carries out the reaction 1,2,3-tri-(9Z-octadecenoyl)-glycerol + 9-hydroxy-octadecanoate = 9-(9Z-octadecenoyloxy)-octadecanoate + 2,3-di-(9Z)-octadecenoyl-sn-glycerol. It catalyses the reaction 1-hexadecanoyl-2,3-di-(9Z)-octadecenoyl-sn-glycerol + 9-hydroxy-octadecanoate = 9-hexadecanoyloxy-octadecanoate + 2,3-di-(9Z)-octadecenoyl-sn-glycerol. The enzyme catalyses 1,2,3-tri-(10Z)-heptadecenoylglycerol + 9-hydroxy-octadecanoate = 2,3-di-(10Z-heptadecenoyl)-sn-glycerol + 9-(10Z-heptadecenoyloxy)-octadecanoate. The catalysed reaction is 1,2,3-tri-(9Z,12Z)-octadecadienoylglycerol + 9-hydroxy-octadecanoate = 2,3-di-(9Z,12Z)-octadecadienoyl-sn-glycerol + 9-(9Z,12Z-octadecadienoyloxy)-octadecanoate. It carries out the reaction 1,2,3-tri-(9Z)-hexadecenoylglycerol + 9-hydroxy-octadecanoate = 2,3-di-(9Z)-hexadecenoyl-sn-glycerol + 9-(9Z-hexadecenoyloxy)-octadecanoate. It catalyses the reaction 9-hydroxy-octadecanoate + 1,2-di-(9Z-octadecenoyl)-sn-glycerol = 9-(9Z-octadecenoyloxy)-octadecanoate + 2-(9Z-octadecenoyl)-glycerol. The enzyme catalyses 1-hexadecanoyl-2,3-di-(9Z)-octadecenoyl-sn-glycerol + 9-hydroxy-octadecanoate = 1-hexadecanoyl-3-(9Z)-octadecenoyl-sn-glycerol + 9-(9Z-octadecenoyloxy)-octadecanoate. Its pathway is glycerolipid metabolism; triacylglycerol degradation. Functionally, catalyzes the initial step in triglyceride hydrolysis in adipocyte and non-adipocyte lipid droplets. Exhibits a strong preference for the hydrolysis of long-chain fatty acid esters at the sn-2 position of the glycerol backbone and acts coordinately with LIPE/HLS and DGAT2 within the lipolytic cascade. Also possesses acylglycerol transacylase and phospholipase A2 activities. Transfers fatty acid from triglyceride to retinol, hydrolyzes retinylesters, and generates 1,3-diacylglycerol from triglycerides. Regulates adiposome size and may be involved in the degradation of adiposomes. Catalyzes the formation of an ester bond between hydroxy fatty acids and fatty acids derived from triglycerides or diglycerides to generate fatty acid esters of hydroxy fatty acids (FAHFAs) in adipocytes. Acts antagonistically with LDAH in regulation of cellular lipid stores. Inhibits LDAH-stimulated lipid droplet fusion. May play an important role in energy homeostasis. May play a role in the response of the organism to starvation, enhancing hydrolysis of triglycerides and providing free fatty acids to other tissues to be oxidized in situations of energy depletion. The protein is Patatin-like phospholipase domain-containing protein 2 (PNPLA2) of Bos taurus (Bovine).